Consider the following 321-residue polypeptide: tRNA-dihydrouridine synthase B (321 aa).

Residues 16–18 and Q70 each bind FMN; that span reads PMA. Catalysis depends on C100, which acts as the Proton donor. FMN is bound by residues K139, 200–202, and 224–225; these read NGD and GR.

Belongs to the Dus family. DusB subfamily. It depends on FMN as a cofactor.

It catalyses the reaction a 5,6-dihydrouridine in tRNA + NAD(+) = a uridine in tRNA + NADH + H(+). The catalysed reaction is a 5,6-dihydrouridine in tRNA + NADP(+) = a uridine in tRNA + NADPH + H(+). In terms of biological role, catalyzes the synthesis of 5,6-dihydrouridine (D), a modified base found in the D-loop of most tRNAs, via the reduction of the C5-C6 double bond in target uridines. The polypeptide is tRNA-dihydrouridine synthase B (Escherichia coli O157:H7).